Consider the following 552-residue polypeptide: Scavenger receptor class B member 1 (552 aa).

Residues 1–11 (MGCSAKARWAA) are Cytoplasmic-facing. A helical membrane pass occupies residues 12–32 (GALGVAGLLCAVLGAVMIVMV). The Extracellular portion of the chain corresponds to 33 to 443 (PSLIKQQVLK…LVLMPKVMHY (411 aa)). N-linked (GlcNAc...) asparagine glycosylation is found at N102, N108, N173, N212, N227, N255, N310, N330, and N383. C251 and C384 form a disulfide bridge. Residues Y393 and V458 each carry the phosphoserine modification. A helical transmembrane segment spans residues 444-464 (AQYVLLALGCVLLLVPVICQI). Residue C462 is the site of S-palmitoyl cysteine attachment. The Cytoplasmic segment spans residues 465–552 (RSQVGAGQRA…GPSLGGGTGS (88 aa)). T493 is modified (phosphoserine).

Belongs to the CD36 family. The C-terminal region binds to PDZK1. In terms of assembly, (Microbial infection) Interacts with hepatitis C virus E1:E2 glycoproteins. N-glycosylated. Post-translationally, the six cysteines of the extracellular domain are all involved in intramolecular disulfide bonds. In terms of tissue distribution, widely expressed.

It localises to the cell membrane. The protein resides in the membrane. It is found in the caveola. In terms of biological role, receptor for different ligands such as phospholipids, cholesterol ester, lipoproteins, phosphatidylserine and apoptotic cells. Receptor for HDL, mediating selective uptake of cholesteryl ether and HDL-dependent cholesterol efflux. Also facilitates the flux of free and esterified cholesterol between the cell surface and apoB-containing lipoproteins and modified lipoproteins, although less efficiently than HDL. May be involved in the phagocytosis of apoptotic cells, via its phosphatidylserine binding activity. Functionally, (Microbial infection) Acts as a receptor for hepatitis C virus in hepatocytes and appears to facilitate its cell entry. Binding between SCARB1 and the hepatitis C virus glycoprotein E2 is independent of the genotype of the viral isolate. (Microbial infection) Mediates uptake of M.fortuitum, E.coli and S.aureus. Its function is as follows. (Microbial infection) Facilitates the entry of human coronavirus SARS-CoV-2 by acting as an entry cofactor through HDL binding. The chain is Scavenger receptor class B member 1 (SCARB1) from Homo sapiens (Human).